Consider the following 179-residue polypeptide: CASP-like protein 5A2 (179 aa).

The segment at 1 to 24 (MNVSHASVHPVEDPPAAATEVENP) is disordered. Over 1-38 (MNVSHASVHPVEDPPAAATEVENPPRVRMDDMEGMPGT) the chain is Cytoplasmic. The helical transmembrane segment at 39-59 (LLGLALRFFQFLFAAAALCVM) threads the bilayer. The Extracellular portion of the chain corresponds to 60-70 (ASTSDFPSVTA). The chain crosses the membrane as a helical span at residues 71 to 91 (FCYLVAATGLQSLWSLALAMV). At 92 to 115 (DVYAIMVKRSLQNRRLVSLFAIGD) the chain is on the cytoplasmic side. A helical transmembrane segment spans residues 116-136 (GVTSTLTFAAACASAGITVLI). The Extracellular portion of the chain corresponds to 137-155 (DNDLNSCAQNHCVQFETST). Residues 156 to 176 (ALAFISWFAALPSFLFNFWSL) traverse the membrane as a helical segment. Residues 177–179 (ASR) are Cytoplasmic-facing.

Belongs to the Casparian strip membrane proteins (CASP) family. In terms of assembly, homodimer and heterodimers.

It is found in the cell membrane. The polypeptide is CASP-like protein 5A2 (Arabidopsis thaliana (Mouse-ear cress)).